Consider the following 513-residue polypeptide: Fructose import ATP-binding protein FruK (513 aa).

2 consecutive ABC transporter domains span residues 8 to 244 (VVMK…IGKS) and 262 to 505 (PGEK…IANT). 40–47 (GENGAGKS) provides a ligand contact to ATP.

This sequence belongs to the ABC transporter superfamily. In terms of assembly, the complex is composed of an ATP-binding protein (FruK), two transmembrane proteins (FruF and FruG) and a solute-binding protein (FruE).

Its subcellular location is the cell membrane. The enzyme catalyses D-fructose(out) + ATP + H2O = D-fructose(in) + ADP + phosphate + H(+). Its function is as follows. Part of the high-affinity ABC transporter complex FruEKFG involved in fructose uptake. Can also transport ribose and xylose, with lower affinity. Probably responsible for energy coupling to the transport system. In Bifidobacterium longum (strain NCC 2705), this protein is Fructose import ATP-binding protein FruK.